The sequence spans 414 residues: Probable sugar-binding periplasmic protein (414 aa).

An N-terminal signal peptide occupies residues Met-1–Ala-22.

Belongs to the bacterial solute-binding protein 1 family.

The protein localises to the periplasm. Part of a binding-protein-dependent transport system for a sugar. In Rhizobium meliloti (strain 1021) (Ensifer meliloti), this protein is Probable sugar-binding periplasmic protein.